We begin with the raw amino-acid sequence, 215 residues long: Chaperone protein TorD (215 aa).

The protein belongs to the TorD/DmsD family. TorD subfamily.

The protein resides in the cytoplasm. Involved in the biogenesis of TorA. Acts on TorA before the insertion of the molybdenum cofactor and, as a result, probably favors a conformation of the apoenzyme that is competent for acquiring the cofactor. This Vibrio vulnificus (strain CMCP6) protein is Chaperone protein TorD.